Reading from the N-terminus, the 450-residue chain is Isoleucine 2-epimerase (450 aa).

Pyridoxal 5'-phosphate contacts are provided by residues 115 to 116, tyrosine 142, and 250 to 253; these read GS and DEVN. Lysine 280 bears the N6-(pyridoxal phosphate)lysine mark. Residue threonine 309 coordinates pyridoxal 5'-phosphate.

This sequence belongs to the class-III pyridoxal-phosphate-dependent aminotransferase family. In terms of assembly, homotetramer. Pyridoxal 5'-phosphate serves as cofactor.

The enzyme catalyses L-isoleucine = D-allo-isoleucine. Functionally, catalyzes the epimerization of L-isoleucine to D-allo-isoleucine and D-allo-isoleucine to L-isoleucine. Can also catalyze the racemization of many nonpolar amino acids, including leucine and valine. Does not have GABA aminotransferase activity. The chain is Isoleucine 2-epimerase from Lentilactobacillus buchneri (Lactobacillus buchneri).